A 22-amino-acid polypeptide reads, in one-letter code: Zinc finger protein 326 (22 aa).

The segment at 1–22 (QGYGFNEPEQTRNQGGSSWEAP) is disordered. Over residues 11–22 (TRNQGGSSWEAP) the composition is skewed to polar residues.

Belongs to the AKAP95 family.

The protein localises to the nucleus matrix. In terms of biological role, probable transcriptional activator which may play a role in neuronal differentiation. Able to bind DNA and activate expression in vitro. This Rattus norvegicus (Rat) protein is Zinc finger protein 326 (Znf326).